Here is an 855-residue protein sequence, read N- to C-terminus: Cone cGMP-specific 3',5'-cyclic phosphodiesterase subunit alpha' (855 aa).

GAF domains lie at 70-219 and 251-428; these read SVEL…SIIL and DVER…GWSL. 3',5'-cyclic GMP-binding positions include Ser-92, Ser-116, 164–167, and Thr-171; that span reads DKQT. Residues 481 to 814 enclose the PDEase domain; the sequence is EEKQLVTILK…VEWKSLADEY (334 aa). The active-site Proton donor is His-557. A divalent metal cation is bound by residues His-561, His-597, Asp-598, and Asp-718. The segment at 823-855 is disordered; sequence EMKKQEEGNTTEKAVEDSGGGGDDKKSKTCLML. Position 852 is a cysteine methyl ester (Cys-852). Cys-852 is lipidated: S-geranylgeranyl cysteine. A propeptide spans 853–855 (removed in mature form); it reads LML.

It belongs to the cyclic nucleotide phosphodiesterase family. As to quaternary structure, composed of two alpha' subunits that are associated with 3 smaller proteins of 11, 13, and 15 kDa. The cofactor is a divalent metal cation.

The protein resides in the cell membrane. It carries out the reaction 3',5'-cyclic GMP + H2O = GMP + H(+). Functionally, as cone-specific cGMP phosphodiesterase, it plays an essential role in light detection and cone phototransduction by rapidly decreasing intracellular levels of cGMP. This is Cone cGMP-specific 3',5'-cyclic phosphodiesterase subunit alpha' (PDE6C) from Bos taurus (Bovine).